Consider the following 310-residue polypeptide: tRNA pseudouridine synthase B (310 aa).

The Nucleophile role is filled by Asp49.

This sequence belongs to the pseudouridine synthase TruB family. Type 1 subfamily.

The catalysed reaction is uridine(55) in tRNA = pseudouridine(55) in tRNA. In terms of biological role, responsible for synthesis of pseudouridine from uracil-55 in the psi GC loop of transfer RNAs. The protein is tRNA pseudouridine synthase B of Rhizobium johnstonii (strain DSM 114642 / LMG 32736 / 3841) (Rhizobium leguminosarum bv. viciae).